The following is a 434-amino-acid chain: Nicotinate phosphoribosyltransferase (434 aa).

H242 carries the post-translational modification Phosphohistidine; by autocatalysis.

This sequence belongs to the NAPRTase family. In terms of processing, transiently phosphorylated on a His residue during the reaction cycle. Phosphorylation strongly increases the affinity for substrates and increases the rate of nicotinate D-ribonucleotide production. Dephosphorylation regenerates the low-affinity form of the enzyme, leading to product release.

It carries out the reaction nicotinate + 5-phospho-alpha-D-ribose 1-diphosphate + ATP + H2O = nicotinate beta-D-ribonucleotide + ADP + phosphate + diphosphate. It functions in the pathway cofactor biosynthesis; NAD(+) biosynthesis; nicotinate D-ribonucleotide from nicotinate: step 1/1. Functionally, catalyzes the synthesis of beta-nicotinate D-ribonucleotide from nicotinate and 5-phospho-D-ribose 1-phosphate at the expense of ATP. In Sinorhizobium fredii (strain NBRC 101917 / NGR234), this protein is Nicotinate phosphoribosyltransferase.